A 136-amino-acid chain; its full sequence is Protein NrdI (136 aa).

Belongs to the NrdI family.

Functionally, probably involved in ribonucleotide reductase function. The polypeptide is Protein NrdI (Escherichia coli (strain 55989 / EAEC)).